The following is a 210-amino-acid chain: ATP-dependent Clp protease proteolytic subunit (210 aa).

S107 serves as the catalytic Nucleophile. Residue H132 is part of the active site.

The protein belongs to the peptidase S14 family. Fourteen ClpP subunits assemble into 2 heptameric rings which stack back to back to give a disk-like structure with a central cavity, resembling the structure of eukaryotic proteasomes.

Its subcellular location is the cytoplasm. The catalysed reaction is Hydrolysis of proteins to small peptides in the presence of ATP and magnesium. alpha-casein is the usual test substrate. In the absence of ATP, only oligopeptides shorter than five residues are hydrolyzed (such as succinyl-Leu-Tyr-|-NHMec, and Leu-Tyr-Leu-|-Tyr-Trp, in which cleavage of the -Tyr-|-Leu- and -Tyr-|-Trp bonds also occurs).. Functionally, cleaves peptides in various proteins in a process that requires ATP hydrolysis. Has a chymotrypsin-like activity. Plays a major role in the degradation of misfolded proteins. The polypeptide is ATP-dependent Clp protease proteolytic subunit (Cereibacter sphaeroides (strain ATCC 17029 / ATH 2.4.9) (Rhodobacter sphaeroides)).